The primary structure comprises 474 residues: tRNA-2-methylthio-N(6)-dimethylallyladenosine synthase (474 aa).

In terms of domain architecture, MTTase N-terminal spans 3 to 120 (KKLLIKTWGC…LPQMIKDSQS (118 aa)). [4Fe-4S] cluster-binding residues include C12, C49, C83, C157, C161, and C164. In terms of domain architecture, Radical SAM core spans 143–375 (RADGVTAFVS…QQQINTQAMR (233 aa)). The 64-residue stretch at 378 to 441 (RQMLNTEQRI…TNSLRGELVR (64 aa)) folds into the TRAM domain.

It belongs to the methylthiotransferase family. MiaB subfamily. As to quaternary structure, monomer. Requires [4Fe-4S] cluster as cofactor.

The protein resides in the cytoplasm. The enzyme catalyses N(6)-dimethylallyladenosine(37) in tRNA + (sulfur carrier)-SH + AH2 + 2 S-adenosyl-L-methionine = 2-methylsulfanyl-N(6)-dimethylallyladenosine(37) in tRNA + (sulfur carrier)-H + 5'-deoxyadenosine + L-methionine + A + S-adenosyl-L-homocysteine + 2 H(+). In terms of biological role, catalyzes the methylthiolation of N6-(dimethylallyl)adenosine (i(6)A), leading to the formation of 2-methylthio-N6-(dimethylallyl)adenosine (ms(2)i(6)A) at position 37 in tRNAs that read codons beginning with uridine. The sequence is that of tRNA-2-methylthio-N(6)-dimethylallyladenosine synthase from Photobacterium profundum (strain SS9).